The chain runs to 881 residues: Formin-like protein 10 (881 aa).

The first 24 residues, 1–24, serve as a signal peptide directing secretion; that stretch reads MAMKRVVFLLLLVAASALVKSSRG. The disordered stretch occupies residues 194-223; it reads LTPSNSLNMEPPSPYYPSKSAHKHQGVAPP. The helical transmembrane segment at 236–256 threads the bilayer; sequence VVLIAVLPTAALSFLAAFLCF. Over residues 333-346 the composition is skewed to polar residues; sequence TLVTGGTQENNATS. Disordered regions lie at residues 333 to 427, 683 to 703, and 837 to 881; these read TLVT…EVNA, ENGRSPPFPSTSDDNSNESLQ, and ASQK…DSND. A compositionally biased stretch (pro residues) spans 351 to 390; sequence LMPPPPPPPPPPPPPPPPPPPRPPPPPPPIKKGAPPPAPP. Over residues 400–424 the composition is skewed to low complexity; sequence LSPTESSRSEESSASELASESSETE. In terms of domain architecture, FH2 spans 422–854; that stretch reads ETEVNAPRAK…KSQANGNSNN (433 aa). Residues 692–701 show a composition bias toward polar residues; that stretch reads STSDDNSNES. Residues 846–865 are compositionally biased toward low complexity; that stretch reads SQANGNSNNPSSQSNPQEQQ. Basic and acidic residues predominate over residues 870-881; that stretch reads LDHHFDSSDSND.

It belongs to the formin-like family. Class-I subfamily.

It is found in the membrane. The protein is Formin-like protein 10 (FH10) of Oryza sativa subsp. japonica (Rice).